We begin with the raw amino-acid sequence, 392 residues long: NAC domain-containing protein 58 (392 aa).

Positions 9 to 173 (LPPGFRFHPT…DWVLCRIYKK (165 aa)) constitute an NAC domain. The segment at 317–345 (STSAGAVVEPPAVTGKRKRSSDGGEPTIQ) is disordered.

As to expression, expressed in leaves, nodes, internodes and mature seeds. Highly expressed in roots. Expressed in leaf sheaths, flag leaves and inflorescences. Expressed in primary and lateral roots, particularly in the vascular tissues. Expressed in the primary phloem of the culm and leaf sheaths. Expressed principally in the primary phloem and in the peripheral zone of the leaf vascular bundles. Expressed in the floral tissues.

It is found in the nucleus. In terms of biological role, transcription factor that acts as a positive regulator of the jasmonate (JA) pathway to mediate leaf senescence. May directly regulate LOX2, AOC, AOS2, AOC1 and OPR7, which are genes involved in the biosynthesis of JA. Regulates positively leaf senescence by directly targeting senescence-associated genes (SAGs) related to chlorophyll degradation, nutrient transport and other genes associated with abscisic acid-induced leaf senescence. Transcription activator that plays a role in mediating abiotic stress responses through the abscisic acid (ABA) pathway. Possesses transcriptional activator activity in yeast. This Oryza sativa subsp. japonica (Rice) protein is NAC domain-containing protein 58.